The primary structure comprises 956 residues: Kinesin heavy chain isoform 5C (956 aa).

A Kinesin motor domain is found at 8–327 (SIKVMCRFRP…LMFGQRAKTI (320 aa)). Positions 87, 89, 90, 91, 92, 93, 94, and 99 each coordinate ATP. Residues 174 to 315 (VSSPEEVMDV…PSVFNEAETK (142 aa)) are microtubule-binding. Threonine 403 is modified (phosphothreonine). The stretch at 406 to 923 (VDGISAEKEK…RRAHSAQIAK (518 aa)) forms a coiled coil. The tract at residues 859–956 (CELPKLEKRL…GSSNSTHYQK (98 aa)) is globular. The disordered stretch occupies residues 910-956 (KNMARRAHSAQIAKPIRPGHYPASSPTAVHAVRGGGGGSSNSTHYQK).

It belongs to the TRAFAC class myosin-kinesin ATPase superfamily. Kinesin family. Kinesin subfamily. Oligomer composed of two heavy chains and two light chains. Interacts with GRIP1. Interacts with KLC3 and TRAK1. Interacts with ZFYVE27.

The protein localises to the cytoplasm. It is found in the cytoskeleton. It localises to the cell projection. The protein resides in the dendrite. The enzyme catalyses ATP + H2O = ADP + phosphate + H(+). Functionally, microtubule-associated force-producing protein that may play a role in organelle transport. Has ATPase activity. Involved in synaptic transmission. Mediates dendritic trafficking of mRNAs. Required for anterograde axonal transportation of MAPK8IP3/JIP3 which is essential for MAPK8IP3/JIP3 function in axon elongation. In Mus musculus (Mouse), this protein is Kinesin heavy chain isoform 5C (Kif5c).